We begin with the raw amino-acid sequence, 180 residues long: UPF0227 protein YcfP (180 aa).

This sequence belongs to the UPF0227 family.

The polypeptide is UPF0227 protein YcfP (Escherichia coli O9:H4 (strain HS)).